We begin with the raw amino-acid sequence, 321 residues long: Ferrochelatase (321 aa).

2 residues coordinate Fe cation: H194 and E275.

Belongs to the ferrochelatase family.

It is found in the cytoplasm. The enzyme catalyses heme b + 2 H(+) = protoporphyrin IX + Fe(2+). Its pathway is porphyrin-containing compound metabolism; protoheme biosynthesis; protoheme from protoporphyrin-IX: step 1/1. Catalyzes the ferrous insertion into protoporphyrin IX. This is Ferrochelatase from Wigglesworthia glossinidia brevipalpis.